The chain runs to 379 residues: Chaperone protein DnaJ (379 aa).

The J domain occupies 5 to 70 (DYYEVLGVAK…QKRAAYDQYG (66 aa)). The CR-type zinc finger occupies 139-217 (GYDTQIRVPS…CHGAGKVKET (79 aa)). Zn(2+)-binding residues include Cys-152, Cys-155, Cys-169, Cys-172, Cys-191, Cys-194, Cys-205, and Cys-208. 4 CXXCXGXG motif repeats span residues 152–159 (CEICHGSG), 169–176 (CPTCSGSG), 191–198 (CPKCHGTG), and 205–212 (CGHCHGAG).

It belongs to the DnaJ family. In terms of assembly, homodimer. Zn(2+) serves as cofactor.

It is found in the cytoplasm. Its function is as follows. Participates actively in the response to hyperosmotic and heat shock by preventing the aggregation of stress-denatured proteins and by disaggregating proteins, also in an autonomous, DnaK-independent fashion. Unfolded proteins bind initially to DnaJ; upon interaction with the DnaJ-bound protein, DnaK hydrolyzes its bound ATP, resulting in the formation of a stable complex. GrpE releases ADP from DnaK; ATP binding to DnaK triggers the release of the substrate protein, thus completing the reaction cycle. Several rounds of ATP-dependent interactions between DnaJ, DnaK and GrpE are required for fully efficient folding. Also involved, together with DnaK and GrpE, in the DNA replication of plasmids through activation of initiation proteins. The chain is Chaperone protein DnaJ from Paraburkholderia phytofirmans (strain DSM 17436 / LMG 22146 / PsJN) (Burkholderia phytofirmans).